The sequence spans 198 residues: Ribonuclease HII (198 aa).

One can recognise an RNase H type-2 domain in the interval 10-198 (QLVAGVDEVG…PVKRALGLAS (189 aa)). Positions 16, 17, and 108 each coordinate a divalent metal cation.

It belongs to the RNase HII family. Mn(2+) serves as cofactor. Requires Mg(2+) as cofactor.

It localises to the cytoplasm. It carries out the reaction Endonucleolytic cleavage to 5'-phosphomonoester.. Endonuclease that specifically degrades the RNA of RNA-DNA hybrids. The protein is Ribonuclease HII of Shigella boydii serotype 4 (strain Sb227).